The chain runs to 420 residues: 3-phosphoshikimate 1-carboxyvinyltransferase (420 aa).

Lys-26, Ser-27, and Arg-31 together coordinate 3-phosphoshikimate. Lys-26 serves as a coordination point for phosphoenolpyruvate. Gly-97 and Arg-125 together coordinate phosphoenolpyruvate. 3-phosphoshikimate is bound by residues Ser-170, Ser-171, Gln-172, Asp-297, Asn-320, and Lys-324. Gln-172 contacts phosphoenolpyruvate. Asp-297 acts as the Proton acceptor in catalysis. Phosphoenolpyruvate contacts are provided by Arg-328, Arg-375, and Lys-400.

The protein belongs to the EPSP synthase family. As to quaternary structure, monomer.

It is found in the cytoplasm. The enzyme catalyses 3-phosphoshikimate + phosphoenolpyruvate = 5-O-(1-carboxyvinyl)-3-phosphoshikimate + phosphate. The protein operates within metabolic intermediate biosynthesis; chorismate biosynthesis; chorismate from D-erythrose 4-phosphate and phosphoenolpyruvate: step 6/7. Functionally, catalyzes the transfer of the enolpyruvyl moiety of phosphoenolpyruvate (PEP) to the 5-hydroxyl of shikimate-3-phosphate (S3P) to produce enolpyruvyl shikimate-3-phosphate and inorganic phosphate. This chain is 3-phosphoshikimate 1-carboxyvinyltransferase, found in Rhizobium leguminosarum bv. trifolii (strain WSM2304).